Consider the following 361-residue polypeptide: Pyruvate dehydrogenase E1 component subunit beta, mitochondrial (361 aa).

A mitochondrion-targeting transit peptide spans 1–27 (MAVNGCMRLLRNGLTSACALEQSVRRL). Position 90 (glutamate 90) interacts with thiamine diphosphate. K(+) contacts are provided by isoleucine 143, alanine 191, valine 192, aspartate 194, and asparagine 196.

In terms of assembly, heterotetramer of two PDHA1 and two PDHB subunits. The heterotetramer interacts with DLAT, and is part of the multimeric pyruvate dehydrogenase complex that contains multiple copies of pyruvate dehydrogenase (E1), dihydrolipoamide acetyltransferase (DLAT, E2) and lipoamide dehydrogenase (DLD, E3). Requires thiamine diphosphate as cofactor.

The protein localises to the mitochondrion matrix. It catalyses the reaction N(6)-[(R)-lipoyl]-L-lysyl-[protein] + pyruvate + H(+) = N(6)-[(R)-S(8)-acetyldihydrolipoyl]-L-lysyl-[protein] + CO2. In terms of biological role, the pyruvate dehydrogenase complex catalyzes the overall conversion of pyruvate to acetyl-CoA and CO(2), and thereby links the glycolytic pathway to the tricarboxylic cycle. The polypeptide is Pyruvate dehydrogenase E1 component subunit beta, mitochondrial (Ascaris suum (Pig roundworm)).